The following is a 537-amino-acid chain: uncharacterized protein (537 aa).

The tract at residues 10–56 is disordered; it reads HHDVEPQNVEEEPPLTGQTIVTEDKLETSAKDKKHESPSMSEDEEGS. Positions 31 to 46 are enriched in basic and acidic residues; it reads TEDKLETSAKDKKHES. 12 consecutive transmembrane segments (helical) span residues 90 to 110, 133 to 153, 156 to 176, 180 to 200, 213 to 233, 243 to 263, 313 to 333, 348 to 368, 393 to 413, 422 to 442, 457 to 477, and 492 to 512; these read FVATVYTFLEVYVIWSSTACI, LFIVGNAFGPMLLGPMSDIFG, WVYVGSLILYIIFQIPQALAY, MMAINSAIAGAFGSSALANVA, GFGISLFVWGANAGASIGSPI, WFYWMNMIVGGFFVILCVLCP, PIIMALGLYNGFAYGLIFLYL, YMGANLTYLNFLVGVTIVVML, FLISLLTVWFFPAGLFWFAFT, SPLIAGGVLGVGDPQLWLAMI, IAAFTLPSFAIAAVLVHLGII, and AFISLSLVATIYVIYFFGHLI.

It belongs to the major facilitator superfamily. CAR1 family.

The protein localises to the endoplasmic reticulum. It localises to the golgi apparatus. The protein resides in the membrane. This is an uncharacterized protein from Schizosaccharomyces pombe (strain 972 / ATCC 24843) (Fission yeast).